Consider the following 365-residue polypeptide: MNILKISKQTLRNNIKIIREYIGNAKMCFPVKANAYGHGIEDIVENTHDLVDFFAVANSLEAFRVTAVAKNPVLVFGVIYYEYIEKMISENIRVSIQDYEYIEKLEQIAKELDKKVYAHININTGMNRMGVDYNDACRTIQRAYESDWLILEGVYSHLACADNRDHPTNIKQKNRFDSIVKFTKGLSQDIICHLSNSYGFLGQKGICYDMVRPGILSYGFLPEFYVDRVIREIKPIARLLSKVVKIITLQEGEGVGYSLIYRGFEGEQLAVIPIGYGDGFPRELGDRGFVNINDVMYPMAGRMSMDGLTVSLGINEYDVKVGDTVELISAIPRNRNSAFSIAKQINTIEYDIMSTLNDRIIRKII.

Lys-32 functions as the Proton acceptor; specific for D-alanine in the catalytic mechanism. Lys-32 bears the N6-(pyridoxal phosphate)lysine mark. Arg-128 lines the substrate pocket. The active-site Proton acceptor; specific for L-alanine is the Tyr-257. Residue Met-305 coordinates substrate.

Belongs to the alanine racemase family. It depends on pyridoxal 5'-phosphate as a cofactor.

The enzyme catalyses L-alanine = D-alanine. It functions in the pathway amino-acid biosynthesis; D-alanine biosynthesis; D-alanine from L-alanine: step 1/1. In terms of biological role, catalyzes the interconversion of L-alanine and D-alanine. May also act on other amino acids. This Francisella tularensis subsp. holarctica (strain OSU18) protein is Alanine racemase (alr).